The chain runs to 1345 residues: Protein dispatched homolog 2 (1345 aa).

The disordered stretch occupies residues 1-28 (MAPEASPERSCSLHTCPLEDPTGAPVPP). A helical membrane pass occupies residues 125-145 (VAVIVGCLAFIFLCTLAGLLG). N-linked (GlcNAc...) asparagine glycosylation is found at asparagine 304 and asparagine 420. An SSD domain is found at 429 to 598 (LGLKPRLLKY…LLWLPATVVL (170 aa)). 6 helical membrane passes run 440-460 (LAED…GMSL), 465-485 (LFIT…AYFL), 497-517 (FVNL…TLIF), 544-564 (FGYL…GSYL), 572-592 (CFAL…LLWL), and 659-679 (YIWI…GGVS). Asparagine 776 carries N-linked (GlcNAc...) asparagine glycosylation. A run of 5 helical transmembrane segments spans residues 919 to 939 (PAVV…LSTW), 945 to 965 (LFSV…LVLL), 974 to 994 (ALFL…YCIS), 1019 to 1039 (AMTT…TILL), and 1043 to 1063 (LGII…FFFQ). 2 disordered regions span residues 1251 to 1271 (VRVP…GHPI) and 1295 to 1345 (PNMP…GYSS). The segment covering 1297-1306 (MPNSHHSSLS) has biased composition (polar residues). Position 1310 is an omega-N-methylarginine (arginine 1310).

Belongs to the dispatched family.

It is found in the membrane. The chain is Protein dispatched homolog 2 (Disp2) from Mus musculus (Mouse).